A 163-amino-acid polypeptide reads, in one-letter code: Phosphopantetheine adenylyltransferase (163 aa).

2 residues coordinate ATP: Ser-10 and His-18. Ser-10 lines the substrate pocket. Substrate contacts are provided by Lys-42, Thr-75, and Arg-89. ATP contacts are provided by residues 90-92 (GIR), Glu-100, and 125-131 (YAHVSSS).

Belongs to the bacterial CoaD family. Homohexamer. Mg(2+) is required as a cofactor.

It is found in the cytoplasm. It catalyses the reaction (R)-4'-phosphopantetheine + ATP + H(+) = 3'-dephospho-CoA + diphosphate. It functions in the pathway cofactor biosynthesis; coenzyme A biosynthesis; CoA from (R)-pantothenate: step 4/5. Functionally, reversibly transfers an adenylyl group from ATP to 4'-phosphopantetheine, yielding dephospho-CoA (dPCoA) and pyrophosphate. The sequence is that of Phosphopantetheine adenylyltransferase from Enterococcus faecalis (strain ATCC 700802 / V583).